The primary structure comprises 82 residues: RNA-binding protein GK0100 (82 aa).

Belongs to the eukaryotic ribosomal protein eL8 family.

This Geobacillus kaustophilus (strain HTA426) protein is RNA-binding protein GK0100.